We begin with the raw amino-acid sequence, 460 residues long: Receptor-like cytosolic serine/threonine-protein kinase RBK2 (460 aa).

A disordered region spans residues 1–67 (MNSASAHDLR…DADTDVQCKN (67 aa)). Over residues 7 to 23 (HDLRLLEVDKEKQDPKS) the composition is skewed to basic and acidic residues. The 273-residue stretch at 143-415 (FSPENIIGRG…VELLLGHEDV (273 aa)) folds into the Protein kinase domain. ATP contacts are provided by residues 149 to 157 (IGRGGYADV) and K171. Residue D267 is the Proton acceptor of the active site. At T307 the chain carries Phosphothreonine. Y315 carries the post-translational modification Phosphotyrosine.

It belongs to the protein kinase superfamily. Ser/Thr protein kinase family. As to quaternary structure, interacts with ARAC5 and ARAC10.

Its subcellular location is the cytoplasm. It carries out the reaction L-seryl-[protein] + ATP = O-phospho-L-seryl-[protein] + ADP + H(+). It catalyses the reaction L-threonyl-[protein] + ATP = O-phospho-L-threonyl-[protein] + ADP + H(+). This chain is Receptor-like cytosolic serine/threonine-protein kinase RBK2 (RBK2), found in Arabidopsis thaliana (Mouse-ear cress).